The primary structure comprises 1157 residues: ATP-dependent helicase/deoxyribonuclease subunit B (1157 aa).

Residues 1–277 (MTLQIIAGKS…KLFLENKRAK (277 aa)) form the UvrD-like helicase ATP-binding domain. Residue 8 to 15 (GKSGTGKT) coordinates ATP. Residues 272 to 578 (ENKRAKSDSL…EFSLLPPSLD (307 aa)) enclose the UvrD-like helicase C-terminal domain. [4Fe-4S] cluster is bound by residues Cys794, Cys1115, Cys1118, and Cys1124.

This sequence belongs to the helicase family. AddB/RexB type 1 subfamily. In terms of assembly, heterodimer of AddA and AddB. Mg(2+) serves as cofactor. Requires [4Fe-4S] cluster as cofactor.

Its function is as follows. The heterodimer acts as both an ATP-dependent DNA helicase and an ATP-dependent, dual-direction single-stranded exonuclease. Recognizes the chi site generating a DNA molecule suitable for the initiation of homologous recombination. The AddB subunit has 5' -&gt; 3' nuclease activity but not helicase activity. This is ATP-dependent helicase/deoxyribonuclease subunit B from Listeria welshimeri serovar 6b (strain ATCC 35897 / DSM 20650 / CCUG 15529 / CIP 8149 / NCTC 11857 / SLCC 5334 / V8).